The chain runs to 800 residues: Phenylalanine--tRNA ligase beta subunit (800 aa).

A tRNA-binding domain is found at 39 to 154; the sequence is TKDIKNLVVG…ESQVPGTDAL (116 aa). A B5 domain is found at 408–483; it reads AFITPIDITA…RIYGYDDIPS (76 aa). 4 residues coordinate Mg(2+): aspartate 461, aspartate 467, glutamate 470, and glutamate 471. Residues 708–800 form the FDX-ACB domain; the sequence is PRFPGMSRDI…ALIEQGAVIR (93 aa).

This sequence belongs to the phenylalanyl-tRNA synthetase beta subunit family. Type 1 subfamily. In terms of assembly, tetramer of two alpha and two beta subunits. The cofactor is Mg(2+).

Its subcellular location is the cytoplasm. It catalyses the reaction tRNA(Phe) + L-phenylalanine + ATP = L-phenylalanyl-tRNA(Phe) + AMP + diphosphate + H(+). The chain is Phenylalanine--tRNA ligase beta subunit from Staphylococcus aureus.